Here is a 162-residue protein sequence, read N- to C-terminus: Deoxyuridine 5'-triphosphate nucleotidohydrolase (162 aa).

Belongs to the dUTPase family. In terms of assembly, homotrimer. Mg(2+) serves as cofactor.

Its subcellular location is the host cytoplasm. The protein localises to the virion. The catalysed reaction is dUTP + H2O = dUMP + diphosphate + H(+). The viral dUTPase may play a role in lowering the dUTP concentration in natural infections to minimize misincorporation of deoxyuridine into the viral DNA and ensure the fidelity of genome replication. In Ornithodoros (relapsing fever ticks), this protein is Deoxyuridine 5'-triphosphate nucleotidohydrolase.